A 100-amino-acid chain; its full sequence is Large ribosomal subunit protein uL23 (100 aa).

This sequence belongs to the universal ribosomal protein uL23 family. Part of the 50S ribosomal subunit. Contacts protein L29, and trigger factor when it is bound to the ribosome.

Its function is as follows. One of the early assembly proteins it binds 23S rRNA. One of the proteins that surrounds the polypeptide exit tunnel on the outside of the ribosome. Forms the main docking site for trigger factor binding to the ribosome. The protein is Large ribosomal subunit protein uL23 of Xylella fastidiosa (strain 9a5c).